A 143-amino-acid chain; its full sequence is Transcriptional regulator MraZ (143 aa).

2 SpoVT-AbrB domains span residues 5 to 47 (EYHH…SMEE) and 76 to 119 (AMES…AKER).

The protein belongs to the MraZ family. Forms oligomers.

It is found in the cytoplasm. The protein resides in the nucleoid. In Lactobacillus helveticus (strain DPC 4571), this protein is Transcriptional regulator MraZ.